A 353-amino-acid polypeptide reads, in one-letter code: Photosystem II D2 protein (353 aa).

Threonine 2 carries the N-acetylthreonine modification. Threonine 2 is subject to Phosphothreonine. The chain crosses the membrane as a helical span at residues 41–61 (CAYFALGGWFTGTTFVTSWYT). Histidine 118 is a chlorophyll a binding site. The helical transmembrane segment at 125–141 (GFMLRQFELARSVQLRP) threads the bilayer. Pheophytin a contacts are provided by glutamine 130 and asparagine 143. The chain crosses the membrane as a helical span at residues 153 to 166 (VFVSVFLIYPLGQS). Residue histidine 198 coordinates chlorophyll a. A helical transmembrane segment spans residues 208 to 228 (AALLCAIHGATVENTLFEDGD). Residues histidine 215 and phenylalanine 262 each contribute to the a plastoquinone site. A Fe cation-binding site is contributed by histidine 215. Histidine 269 serves as a coordination point for Fe cation. A helical membrane pass occupies residues 279 to 295 (GLWMSALGVVGLALNLR).

It belongs to the reaction center PufL/M/PsbA/D family. As to quaternary structure, PSII is composed of 1 copy each of membrane proteins PsbA, PsbB, PsbC, PsbD, PsbE, PsbF, PsbH, PsbI, PsbJ, PsbK, PsbL, PsbM, PsbT, PsbX, PsbY, PsbZ, Psb30/Ycf12, at least 3 peripheral proteins of the oxygen-evolving complex and a large number of cofactors. It forms dimeric complexes. The cofactor is The D1/D2 heterodimer binds P680, chlorophylls that are the primary electron donor of PSII, and subsequent electron acceptors. It shares a non-heme iron and each subunit binds pheophytin, quinone, additional chlorophylls, carotenoids and lipids. There is also a Cl(-1) ion associated with D1 and D2, which is required for oxygen evolution. The PSII complex binds additional chlorophylls, carotenoids and specific lipids..

It localises to the plastid. Its subcellular location is the chloroplast thylakoid membrane. The enzyme catalyses 2 a plastoquinone + 4 hnu + 2 H2O = 2 a plastoquinol + O2. Photosystem II (PSII) is a light-driven water:plastoquinone oxidoreductase that uses light energy to abstract electrons from H(2)O, generating O(2) and a proton gradient subsequently used for ATP formation. It consists of a core antenna complex that captures photons, and an electron transfer chain that converts photonic excitation into a charge separation. The D1/D2 (PsbA/PsbD) reaction center heterodimer binds P680, the primary electron donor of PSII as well as several subsequent electron acceptors. D2 is needed for assembly of a stable PSII complex. The sequence is that of Photosystem II D2 protein from Ceratophyllum demersum (Rigid hornwort).